The following is a 122-amino-acid chain: Large ribosomal subunit protein uL14 (122 aa).

Belongs to the universal ribosomal protein uL14 family. In terms of assembly, part of the 50S ribosomal subunit. Forms a cluster with proteins L3 and L19. In the 70S ribosome, L14 and L19 interact and together make contacts with the 16S rRNA in bridges B5 and B8.

Binds to 23S rRNA. Forms part of two intersubunit bridges in the 70S ribosome. The chain is Large ribosomal subunit protein uL14 from Sorangium cellulosum (strain So ce56) (Polyangium cellulosum (strain So ce56)).